A 358-amino-acid polypeptide reads, in one-letter code: Phospho-N-acetylmuramoyl-pentapeptide-transferase (358 aa).

A run of 10 helical transmembrane segments spans residues 25-45 (RTIY…PWVI), 73-93 (TMGG…WADL), 97-117 (YVWT…TDDY), 134-154 (MFWQ…VAGM), 172-192 (YLYI…VNLT), 197-217 (GLAI…AYIA), 233-253 (GAGE…GFLW), 261-281 (VFMG…LAVI), 286-306 (MLLV…IFQV), and 335-355 (KIIV…ISTL).

Belongs to the glycosyltransferase 4 family. MraY subfamily. Mg(2+) is required as a cofactor.

It localises to the cell inner membrane. It catalyses the reaction UDP-N-acetyl-alpha-D-muramoyl-L-alanyl-gamma-D-glutamyl-meso-2,6-diaminopimeloyl-D-alanyl-D-alanine + di-trans,octa-cis-undecaprenyl phosphate = di-trans,octa-cis-undecaprenyl diphospho-N-acetyl-alpha-D-muramoyl-L-alanyl-D-glutamyl-meso-2,6-diaminopimeloyl-D-alanyl-D-alanine + UMP. It functions in the pathway cell wall biogenesis; peptidoglycan biosynthesis. Catalyzes the initial step of the lipid cycle reactions in the biosynthesis of the cell wall peptidoglycan: transfers peptidoglycan precursor phospho-MurNAc-pentapeptide from UDP-MurNAc-pentapeptide onto the lipid carrier undecaprenyl phosphate, yielding undecaprenyl-pyrophosphoryl-MurNAc-pentapeptide, known as lipid I. The chain is Phospho-N-acetylmuramoyl-pentapeptide-transferase from Geobacter sulfurreducens (strain ATCC 51573 / DSM 12127 / PCA).